Consider the following 447-residue polypeptide: C4-dicarboxylate transport protein (447 aa).

Helical transmembrane passes span 19 to 39 (ILYV…HFYP), 55 to 75 (LVKM…IAGL), 90 to 110 (IYFL…ANVV), 155 to 175 (AFAS…GIAL), 199 to 219 (LVAI…AFTI), 232 to 252 (MLVG…LGLV), 343 to 363 (LLLV…AGFI), and 366 to 386 (AATL…ILGV).

Belongs to the dicarboxylate/amino acid:cation symporter (DAACS) (TC 2.A.23) family.

It is found in the cell inner membrane. Functionally, responsible for the transport of dicarboxylates such as succinate, fumarate, and malate from the periplasm across the membrane. This chain is C4-dicarboxylate transport protein, found in Rhodospirillum rubrum (strain ATCC 11170 / ATH 1.1.1 / DSM 467 / LMG 4362 / NCIMB 8255 / S1).